The following is a 312-amino-acid chain: MSDFHHISVMAAEVIQYLAPRAGGIYVDGTLGGGGHARQILEASAPDGLLIGFDRDREAIAIAAERLAPYGERVRLVQRNFACLAETLDEMGIDAIDGFLLDVGVSSHQLDTAARGFSFQHDAPLDMRMDVSSGQSASDLVNTLSEADLARIIWDYGEERWAKRIAAFIVKRREESPIETTMQLVDVIKGAVPRGAWDVRLHPATRTFQALRIAVNDELASLEKALAAGVRFLKKGGRGVVISFHSLEDRIVKTSFRSFAQGCTCPKSIPRCVCGKLPLVKVITGKPVMANEAEVSMNPRSRSARLRAAEKI.

Residues 34-36 (GGH), aspartate 54, phenylalanine 81, aspartate 102, and glutamine 109 each bind S-adenosyl-L-methionine.

Belongs to the methyltransferase superfamily. RsmH family.

It is found in the cytoplasm. The enzyme catalyses cytidine(1402) in 16S rRNA + S-adenosyl-L-methionine = N(4)-methylcytidine(1402) in 16S rRNA + S-adenosyl-L-homocysteine + H(+). In terms of biological role, specifically methylates the N4 position of cytidine in position 1402 (C1402) of 16S rRNA. This Geotalea uraniireducens (strain Rf4) (Geobacter uraniireducens) protein is Ribosomal RNA small subunit methyltransferase H.